We begin with the raw amino-acid sequence, 935 residues long: Intimin (935 aa).

A signal peptide spans 1–41; that stretch reads MITHGFYARTRHKHKLKKTFIMLSAGLGLFFYVNQNSFANG. The tract at residues 40–153 is peptidoglycan-binding; sequence NGENYFKLSS…KMTKMSPDAT (114 aa). The segment at 40–153 is sufficient for homodimerization; that stretch reads NGENYFKLSS…KMTKMSPDAT (114 aa). The tract at residues 40 to 212 is required for periplasmic localization; that stretch reads NGENYFKLSS…LQAWLQHYGT (173 aa). In terms of domain architecture, LysM spans 63 to 112; sequence LFYTLKTGETVSSISKSQGISLSVIWSLNKHLYSSESEMLKAAPGQQIIL. The segment at 210-411 is inverse autotransporter; sequence YGTAEVNLQS…LYSMQFRYQF (202 aa). The tract at residues 402–411 is signature sequence for beta-barrel assembly machinery (BAM), which recognizes the unfolded beta-barrel in the periplasm; that stretch reads LYSMQFRYQF. Big-1 domains follow at residues 560–653 and 660–754; these read VTDF…VIFV and ITEI…VTFF. The 45-residue stretch at 790–834 folds into the BIG2 domain; that stretch reads GGNGTYSWHSENTNIATVDESGKVTLKGKGTAVINVTSGDKQTVS. A disulfide bridge connects residues C859 and C933.

This sequence belongs to the intimin/invasin family. In terms of assembly, homodimer. Interacts with Tir.

The protein localises to the cell outer membrane. Functionally, an inverse autotransporter. Adhesin, which mediates attachment to the human intestine epithelial cells. Necessary for the production of attaching and effacing lesions on infected human tissue culture cells. Anchored to the outer membrane by binding to peptidoglycan (PGN) via its periplasmic domain, thus helping in receptor interactions during host invasion. PGN-binding may also aid in resisting mechanical and chemical stress during transit of the bacterium through the gastrointestinal tract of the host. The chain is Intimin (eae) from Escherichia coli O111:H-.